The chain runs to 1276 residues: MHELGTRQRPLSSSSSSSSSSNMTDVSAAAGGATAPAETAATSSSASKPLTNGANKTSTAMAAPTTTPTTAATAAGAAEAGAIASVAGISNQVKLEHHHRQSNNNRPVAPYPPVPAAKPKPTPTPTAESKFKSTSREVDVALRPTPARSSTISPGVSIHTQTIQQESSSAKPGMSSSSSSAQQDVDEVARLFEEKPEAFEKWLTERAPPEALSRLQEFIESRKPLKRPSVTSDLFQQWMSASPTVQQKSPRSLSNSSASSTLPECRRHLMDLDEGELFMELIRDVANELDIDVLCHKILVNVGLLTHADRGSLFLAKGTPHNKYLVAKLFDVTQKTALKDAVTRASAEEIIIPFGIGIAGMVAQTKQMINIKEAYKDARFNCEIDLKTGYKTNAILCMPICNYEGDIIGVAQIINKTNGCMEFDEHDVEIFRRYLTFCGIGIQNAQLFEMSVQEYRRNQILLNLARSIFEEQNNLECLVTKIMTEARELLNCERCSVFLVDLDCCEASHLEKIIEKPNQPEQRPTRAIMPGDSFDEKKMRNRFTVLFELGGEYQAASVSRPSKTELSTSTLAQIAQFVATTGQTVNICDVHEWVRDHNQIRAESEIDSTQAILCMPIVNAQKIVIGVAQLINKANGVPFTESDASIFEAFAIFCGLGIHNTQMYENACKLMAKQKVALECLSYHATASQDQTEKLTQDAIAEAESYNLYSFTFTDFELVDDDTCRAVLRMFLQCNLVSQFQIPYDVLCRWVLSVRKNYRPVKYHNWRHALNVAQTMFAMLKTGKMERFMTDLEILGLLVACLCHDLDHRGTNNAFQTKTESPLAILYTTSTMEHHHFDQCVMILNSEGNNIFQPRTTRTFLLLARRFLRFDLLPFRAFTRALRPLVRPLLELDVLELPDPSRIFLLTVYLRLVTRTIFLPPPEDEEEEDEVEDSVVLVVASVVVVVAVAASVVLKAELDVEALSPEDYRSVMKTVESAILSTDLAMYFKKRNAFLELVENGEFDWQGEEKKDLLCGMMMTACDVSAIAKPWEVQHKVAKLVADEFFDQGDLEKLQLNTQPVAMMDRERKDELPKMQVGFIDVICLPLYRVLCDTFPWITPLYEGTLENRRNWQDLAEKVEMGLTWIDHDTIDKPVEEFAGCADEEIKDIEFTVTTLNCNQQAQHGAGAGGDDSHTPEHQRSGSRLSMKKTGALGKAVRSKLSKTLYNSMDGSKPKTSLKLLESHVSEDMDDKSPTSPSQPPHAGGSVGRMSASSSTSSAGTVVDKSKKRSKLCSLL.

Disordered stretches follow at residues 1–76 (MHEL…TAAG), 91–185 (NQVK…QQDV), and 241–260 (ASPTVQQKSPRSLSNSSASS). Composition is skewed to low complexity over residues 12 to 47 (SSSSSSSSSSNMTDVSAAAGGATAPAETAATSSSAS) and 57 to 76 (TSTAMAAPTTTPTTAATAAG). Residues 109–124 (APYPPVPAAKPKPTPT) show a composition bias toward pro residues. A compositionally biased stretch (basic and acidic residues) spans 129–140 (SKFKSTSREVDV). A compositionally biased stretch (polar residues) spans 147 to 166 (ARSSTISPGVSIHTQTIQQE). 2 stretches are compositionally biased toward low complexity: residues 167-180 (SSSAKPGMSSSSSS) and 249-260 (SPRSLSNSSASS). 2 consecutive GAF domains span residues 290–442 (DIDV…GIGI) and 474–658 (NLEC…GLGI). Residues 688–1119 (SQDQTEKLTQ…RNWQDLAEKV (432 aa)) form the PDEase domain. His764 acts as the Proton donor in catalysis. Residues His768, His804, Asp805, and Asp1023 each coordinate a divalent metal cation. 2 disordered regions span residues 1162–1193 (AQHGAGAGGDDSHTPEHQRSGSRLSMKKTGAL) and 1205–1276 (LYNS…CSLL). Basic and acidic residues-rich tracts occupy residues 1171–1180 (DDSHTPEHQR) and 1221–1233 (LESHVSEDMDDKS). Positions 1248–1263 (GRMSASSSTSSAGTVV) are enriched in low complexity. The span at 1266-1276 (SKKRSKLCSLL) shows a compositional bias: basic residues. At Cys1273 the chain carries Cysteine methyl ester. A lipid anchor (S-farnesyl cysteine) is attached at Cys1273. Positions 1274 to 1276 (SLL) are cleaved as a propeptide — removed in mature form.

This sequence belongs to the cyclic nucleotide phosphodiesterase family. As to quaternary structure, interacts with PrBP. A divalent metal cation serves as cofactor.

The protein resides in the cell membrane. It carries out the reaction 3',5'-cyclic GMP + H2O = GMP + H(+). In terms of biological role, has a role regulating cGMP transport in Malpighian tubule principal cells. This Drosophila persimilis (Fruit fly) protein is cGMP-specific 3',5'-cyclic phosphodiesterase.